The primary structure comprises 200 residues: Large ribosomal subunit protein uL18 (200 aa).

The protein belongs to the universal ribosomal protein uL18 family. As to quaternary structure, part of the 50S ribosomal subunit. Contacts the 5S and 23S rRNAs.

Its function is as follows. This is one of the proteins that bind and probably mediate the attachment of the 5S RNA into the large ribosomal subunit, where it forms part of the central protuberance. The sequence is that of Large ribosomal subunit protein uL18 from Thermococcus sibiricus (strain DSM 12597 / MM 739).